Consider the following 545-residue polypeptide: Probable intron-encoded endonuclease 4 (545 aa).

The next 7 membrane-spanning stretches (helical) occupy residues 1–21 (MYLS…FFGR), 30–50 (LITC…FFEV), 81–101 (LTVA…IYSI), 119–139 (LFTF…MFVG), 140–160 (WEGV…RIAA), 177–197 (FLTI…YATV), and 200–220 (LAPY…LIGA). Residues 1 to 239 (MYLSIIILPL…HVWLPMAMEG (239 aa)) form a ndh-5 exons 1 and 2 encoded region. The interval 240–545 (FFSRAFLKLH…NNINKSDYNK (306 aa)) is ndh-5 intron 2 encoded.

The protein in the N-terminal section; belongs to the complex I subunit 5 family. In the C-terminal section; belongs to the LAGLIDADG endonuclease family.

Its subcellular location is the mitochondrion membrane. Functionally, mitochondrial DNA endonuclease involved in intron homing. This Neurospora crassa (strain ATCC 24698 / 74-OR23-1A / CBS 708.71 / DSM 1257 / FGSC 987) protein is Probable intron-encoded endonuclease 4.